The following is a 326-amino-acid chain: Balbiani ring protein 1 (326 aa).

A compositionally biased stretch (low complexity) spans 1 to 33 (PSKSGPRPSKSGPRPSKSGPRPSKSGPRPSKSG). The tract at residues 1–119 (PSKSGPRPSK…RESPVCDDAM (119 aa)) is disordered. Residues 34 to 51 (PRPEKCGSAMRKAEAEKC) are compositionally biased toward basic and acidic residues. Positions 93 to 102 (VTPTPEVPTT) are enriched in low complexity. Over residues 107 to 119 (SESRESPVCDDAM) the composition is skewed to basic and acidic residues.

Salivary gland.

Its subcellular location is the secreted. Functionally, used by the larvae to construct a supramolecular structure, the larval tube. The polypeptide is Balbiani ring protein 1 (BR1) (Chironomus pallidivittatus (Midge)).